The following is a 239-amino-acid chain: ATP-dependent dethiobiotin synthetase BioD (239 aa).

An ATP-binding site is contributed by 15-20 (EIGKTF). Residue Thr-19 participates in Mg(2+) binding. Lys-40 is an active-site residue. Residues Asp-57, 118–121 (EGVG), and 178–179 (NH) each bind ATP. Residues Asp-57 and Glu-118 each contribute to the Mg(2+) site.

It belongs to the dethiobiotin synthetase family. In terms of assembly, homodimer. The cofactor is Mg(2+).

The protein localises to the cytoplasm. It catalyses the reaction (7R,8S)-7,8-diammoniononanoate + CO2 + ATP = (4R,5S)-dethiobiotin + ADP + phosphate + 3 H(+). It participates in cofactor biosynthesis; biotin biosynthesis; biotin from 7,8-diaminononanoate: step 1/2. Functionally, catalyzes a mechanistically unusual reaction, the ATP-dependent insertion of CO2 between the N7 and N8 nitrogen atoms of 7,8-diaminopelargonic acid (DAPA, also called 7,8-diammoniononanoate) to form a ureido ring. The sequence is that of ATP-dependent dethiobiotin synthetase BioD from Burkholderia cenocepacia (strain ATCC BAA-245 / DSM 16553 / LMG 16656 / NCTC 13227 / J2315 / CF5610) (Burkholderia cepacia (strain J2315)).